Consider the following 240-residue polypeptide: Regulatory protein SdiA (240 aa).

The HTH luxR-type domain maps to 173-238 (VMTPEMNFSK…QVACYAAATG (66 aa)). Positions 197–216 (SAEIAMILSISENTVNFHQK) form a DNA-binding region, H-T-H motif.

Activates cell division by specifically increasing transcription from one of the two promoters that lie immediately upstream of the ftsQAZ gene cluster. Activates ydiV expression in response to extracellular autoinducer AI-1 (Vibrio fischeri autoinducer oxoC6). The chain is Regulatory protein SdiA (sdiA) from Escherichia coli (strain K12).